Consider the following 115-residue polypeptide: NADH-ubiquinone oxidoreductase chain 3 (115 aa).

Transmembrane regions (helical) follow at residues 3-23 (LMLT…IAFW), 55-75 (FFLV…LLPL), and 87-107 (VLFM…YEWI).

Belongs to the complex I subunit 3 family. Core subunit of respiratory chain NADH dehydrogenase (Complex I) which is composed of 45 different subunits. Interacts with TMEM186. Interacts with TMEM242.

Its subcellular location is the mitochondrion inner membrane. The enzyme catalyses a ubiquinone + NADH + 5 H(+)(in) = a ubiquinol + NAD(+) + 4 H(+)(out). Functionally, core subunit of the mitochondrial membrane respiratory chain NADH dehydrogenase (Complex I) which catalyzes electron transfer from NADH through the respiratory chain, using ubiquinone as an electron acceptor. Essential for the catalytic activity of complex I. This is NADH-ubiquinone oxidoreductase chain 3 from Dugong dugon (Dugong).